Consider the following 145-residue polypeptide: Superoxide dismutase [Mn/Fe] (145 aa).

Fe(3+)-binding residues include histidine 10 and histidine 64. Mn(2+) is bound by residues histidine 10 and histidine 64.

The protein belongs to the iron/manganese superoxide dismutase family. Mn(2+) is required as a cofactor. The cofactor is Fe(3+).

The catalysed reaction is 2 superoxide + 2 H(+) = H2O2 + O2. Functionally, destroys superoxide anion radicals which are normally produced within the cells and which are toxic to biological systems. Catalyzes the dismutation of superoxide anion radicals into O2 and H2O2 by successive reduction and oxidation of the transition metal ion at the active site. The sequence is that of Superoxide dismutase [Mn/Fe] (sodA) from Streptococcus alactolyticus.